Consider the following 271-residue polypeptide: Hydroxyethylthiazole kinase (271 aa).

M45 contacts substrate. 2 residues coordinate ATP: R121 and T168. Position 195 (G195) interacts with substrate.

It belongs to the Thz kinase family. Mg(2+) serves as cofactor.

It carries out the reaction 5-(2-hydroxyethyl)-4-methylthiazole + ATP = 4-methyl-5-(2-phosphooxyethyl)-thiazole + ADP + H(+). It participates in cofactor biosynthesis; thiamine diphosphate biosynthesis; 4-methyl-5-(2-phosphoethyl)-thiazole from 5-(2-hydroxyethyl)-4-methylthiazole: step 1/1. In terms of biological role, catalyzes the phosphorylation of the hydroxyl group of 4-methyl-5-beta-hydroxyethylthiazole (THZ). The protein is Hydroxyethylthiazole kinase of Bacillus pumilus (strain SAFR-032).